The chain runs to 382 residues: Neuropeptide Y receptor type 1 (382 aa).

The Extracellular segment spans residues 1–33 (MNSTLFSKVENHSIHYNASENSPLLAFENDDCH). 3 N-linked (GlcNAc...) asparagine glycosylation sites follow: Asn2, Asn11, and Asn17. The helical transmembrane segment at 34 to 54 (LPLAVIFTLALAYGAVIILGV) threads the bilayer. The Cytoplasmic portion of the chain corresponds to 55–75 (SGNLALIIIILKQKEMRNVTN). Residues 76 to 96 (ILIVNLSFSDLLVAVMCLPFT) form a helical membrane-spanning segment. Topologically, residues 97-115 (FVYTLMDHWVFGETMCKLN) are extracellular. Cys112 and Cys197 form a disulfide bridge. Residues 116 to 136 (PFVQCVSITVSIFSLVLIAVE) form a helical membrane-spanning segment. Topologically, residues 137–153 (RHQLIINPRGWRPNNRH) are cytoplasmic. Residues 154–174 (AYIGITVIWVLAVASSLPFVI) form a helical membrane-spanning segment. Residues 175–210 (YQILTDEPFQNVSLAAFKDKYVCFDKFPSDSHRLSY) are Extracellular-facing. The helical transmembrane segment at 211-231 (TTLLLVLQYFGPLCFIFICYF) threads the bilayer. The Cytoplasmic portion of the chain corresponds to 232-259 (KIYIRLKRRNNMMDKIRDSKYRSSETKR). Residues 260–280 (INIMLLSIVVAFAVCWLPLTI) traverse the membrane as a helical segment. Topologically, residues 281–298 (FNTVFDWNHQIIATCNHN) are extracellular. The chain crosses the membrane as a helical span at residues 299 to 319 (LLFLLCHLTAMISTCVNPIFY). Residues 320 to 382 (GFLNKNFQRD…KISMNDNEKV (63 aa)) are Cytoplasmic-facing. Cys337 carries the S-palmitoyl cysteine lipid modification. Phosphoserine occurs at positions 367 and 375.

This sequence belongs to the G-protein coupled receptor 1 family. In terms of tissue distribution, the alpha form is highly expressed in the brain, heart, kidney, spleen, skeletal muscle, and lung, whereas the beta receptor mRNA was not detected in these tissues. However, the beta form is expressed in mouse embryonic developmental stage (7 and 11 days), bone marrow cells and several hematopoietic cell lines.

The protein localises to the cell membrane. Its function is as follows. Receptor for neuropeptide Y and peptide YY. This chain is Neuropeptide Y receptor type 1 (Npy1r), found in Mus musculus (Mouse).